A 264-amino-acid polypeptide reads, in one-letter code: MGRGKIEIKRIENANSRQVTFSKRRAGLLKKAHELSVLCDAEVAVIVFSKSGKLFEFSSTSMKKTLLRYGNYQISSDVPGINCKTENQEECTEVDLLKDEISMLQEKHLHMQGKPLNLLSLKELQHLEKQLNFSLISVRERKELLLTKQLEESRLKEQRAELENETLRRQVQELRSFLPSINQHYAPSYIRCFAIDPKNSLLSNTCLGDINCSLQNTNSDTTLQLGLPGEAHDTRKNEGDRESPSSDSVTTSTTRATAQRISLV.

The region spanning 3 to 57 (RGKIEIKRIENANSRQVTFSKRRAGLLKKAHELSVLCDAEVAVIVFSKSGKLFEF) is the MADS-box domain. Positions 87–177 (NQEECTEVDL…RRQVQELRSF (91 aa)) constitute a K-box domain. The interval 223 to 264 (LQLGLPGEAHDTRKNEGDRESPSSDSVTTSTTRATAQRISLV) is disordered. Residues 230–244 (EAHDTRKNEGDRESP) are compositionally biased toward basic and acidic residues. Residues 245–257 (SSDSVTTSTTRAT) show a composition bias toward low complexity.

The protein localises to the nucleus. In terms of biological role, probable transcription factor. This is Agamous-like MADS-box protein AGL15 (AGL15) from Brassica napus (Rape).